We begin with the raw amino-acid sequence, 380 residues long: Gap junction gamma-1 protein (380 aa).

Residues 1-22 (MSWSFLTRLLDEISNHSTFVGK) are Cytoplasmic-facing. Residues 23–45 (IWLTLFIIFRIVLTVVGGESIYY) traverse the membrane as a helical segment. Topologically, residues 46–75 (DEQSKFVCNTQQPGCENVCYDAFAPLSHVR) are extracellular. Residues 76–95 (FWVFQIILITTPTIMYLGFA) traverse the membrane as a helical segment. Residues 96–171 (MHKIARSNDV…RRIKRDGLMK (76 aa)) are Cytoplasmic-facing. The helical transmembrane segment at 172 to 194 (VYILQLLSRIIFEVGFLFGQYIL) threads the bilayer. Topologically, residues 195–228 (YGFEVAPSYVCTRSPCPHTVDCFVSRPTEKTIFL) are extracellular. Residues 229–251 (LIMYAVSCLCLSLTVLEILHLGL) traverse the membrane as a helical segment. Over 252-380 (SGIRDAFRRR…GSKCEKGIHA (129 aa)) the chain is Cytoplasmic. The tract at residues 337 to 380 (AYQNGESSPSRSSSPESNGTAVEQNRLNFAQEKQGSKCEKGIHA) is disordered. Residues 342 to 353 (ESSPSRSSSPES) are compositionally biased toward low complexity. Polar residues predominate over residues 354-369 (NGTAVEQNRLNFAQEK). A compositionally biased stretch (basic and acidic residues) spans 370-380 (QGSKCEKGIHA).

Belongs to the connexin family. Gamma-type subfamily. As to quaternary structure, a connexon is composed of a hexamer of connexins.

The protein localises to the cell membrane. The protein resides in the cell junction. Its subcellular location is the gap junction. Functionally, one gap junction consists of a cluster of closely packed pairs of transmembrane channels, the connexons, through which materials of low MW diffuse from one cell to a neighboring cell. Participates in a developmental pathway for formation of the notochord and tail. The sequence is that of Gap junction gamma-1 protein (gjc1) from Danio rerio (Zebrafish).